Reading from the N-terminus, the 326-residue chain is Type II methyltransferase M.EcoRI (326 aa).

This sequence belongs to the N(4)/N(6)-methyltransferase family. Monomer.

The enzyme catalyses a 2'-deoxyadenosine in DNA + S-adenosyl-L-methionine = an N(6)-methyl-2'-deoxyadenosine in DNA + S-adenosyl-L-homocysteine + H(+). In terms of biological role, a methylase that recognizes the double-stranded sequence 5'-GAATTC-3', methylates A-3 on both strands, and protects the DNA from cleavage by the EcoRI endonuclease. The protein is Type II methyltransferase M.EcoRI (ecoRIM) of Escherichia coli.